The chain runs to 1574 residues: Myosin-2 (1574 aa).

Residue Ser2 is modified to N-acetylserine. Positions Glu4–Asp57 constitute a Myosin N-terminal SH3-like domain. In terms of domain architecture, Myosin motor spans Glu70–Ser781. Gly164 to Thr171 serves as a coordination point for ATP. The tract at residues Phe443–Glu523 is actin-binding. IQ domains lie at Met784–Gln806, Ile807–Met831, Lys832–Val855, Leu856–His879, Glu880–Arg902, and Thr903–Ser932. The stretch at Val933–Thr1088 forms a coiled coil. Residues Gly1087–His1574 form a non alpha-helical, tail domain region. A Phosphothreonine modification is found at Thr1097. Ser1121 carries the post-translational modification Phosphoserine. In terms of domain architecture, Dilute spans Ala1226 to Lys1501.

It belongs to the TRAFAC class myosin-kinesin ATPase superfamily. Myosin family. Homodimer. Interacts with calmodulin (CMD1) and the myosin light chain MLC1 through its IQ repeats. Binds to the membrane receptors SEC4 and VAC17 to transport secretory vesicles and the vacuole, respectively. Binds to KAR9, which transports BIM1-coated cytoplasmic microtubules that are attached to the spindle pole body into the emerging bud, thereby correctly orienting the mitotic spindle. Interacts with YPT11 and MMR1 to accelerate mitochondrial distribution to the bud. Interacts with SHE4 and localizes it to the bud tip. Interacts with RHO3 and SMY1, putative regulators of MYO2 function. Interacts with SRO7.

It localises to the bud neck. The protein localises to the bud tip. Functionally, myosin heavy chain that is required for the cell cycle-regulated transport of various organelles and proteins for their segregation. Functions by binding with its tail domain to receptor proteins on organelles and exerting force with its N-terminal motor domain against actin filaments, thereby transporting its cargo along polarized actin cables. Essential for the delivery of secretory vesicles to sites of active growth during bud emergence and cytokinesis. Required for segregation and inheritance of peroxisomes, late Golgi compartments, mitochondria and the vacuole to the daughter cell during cell division. Also required for correct alignment of the spindle during mitosis. This Saccharomyces cerevisiae (strain ATCC 204508 / S288c) (Baker's yeast) protein is Myosin-2 (MYO2).